The following is a 394-amino-acid chain: Elongation factor Tu (394 aa).

The tr-type G domain occupies 10–204 (KPHVNIGTIG…AVDSYIPQPV (195 aa)). Residues 19 to 26 (GHVDHGKT) are G1. GTP is bound at residue 19–26 (GHVDHGKT). Thr26 lines the Mg(2+) pocket. The segment at 60-64 (GITIS) is G2. The tract at residues 81–84 (DCPG) is G3. GTP is bound by residues 81-85 (DCPGH) and 136-139 (NKVD). The tract at residues 136–139 (NKVD) is G4. Residues 174 to 176 (SAL) form a G5 region.

The protein belongs to the TRAFAC class translation factor GTPase superfamily. Classic translation factor GTPase family. EF-Tu/EF-1A subfamily. In terms of assembly, monomer.

The protein resides in the cytoplasm. It carries out the reaction GTP + H2O = GDP + phosphate + H(+). In terms of biological role, GTP hydrolase that promotes the GTP-dependent binding of aminoacyl-tRNA to the A-site of ribosomes during protein biosynthesis. The chain is Elongation factor Tu from Rickettsia massiliae (strain Mtu5).